The sequence spans 172 residues: Crossover junction endodeoxyribonuclease RuvC (172 aa).

Catalysis depends on residues D7, E68, and D140. Positions 7, 68, and 140 each coordinate Mg(2+).

Belongs to the RuvC family. In terms of assembly, homodimer which binds Holliday junction (HJ) DNA. The HJ becomes 2-fold symmetrical on binding to RuvC with unstacked arms; it has a different conformation from HJ DNA in complex with RuvA. In the full resolvosome a probable DNA-RuvA(4)-RuvB(12)-RuvC(2) complex forms which resolves the HJ. Requires Mg(2+) as cofactor.

Its subcellular location is the cytoplasm. The catalysed reaction is Endonucleolytic cleavage at a junction such as a reciprocal single-stranded crossover between two homologous DNA duplexes (Holliday junction).. In terms of biological role, the RuvA-RuvB-RuvC complex processes Holliday junction (HJ) DNA during genetic recombination and DNA repair. Endonuclease that resolves HJ intermediates. Cleaves cruciform DNA by making single-stranded nicks across the HJ at symmetrical positions within the homologous arms, yielding a 5'-phosphate and a 3'-hydroxyl group; requires a central core of homology in the junction. The consensus cleavage sequence is 5'-(A/T)TT(C/G)-3'. Cleavage occurs on the 3'-side of the TT dinucleotide at the point of strand exchange. HJ branch migration catalyzed by RuvA-RuvB allows RuvC to scan DNA until it finds its consensus sequence, where it cleaves and resolves the cruciform DNA. This Polynucleobacter asymbioticus (strain DSM 18221 / CIP 109841 / QLW-P1DMWA-1) (Polynucleobacter necessarius subsp. asymbioticus) protein is Crossover junction endodeoxyribonuclease RuvC.